The chain runs to 176 residues: Ribosome maturation factor RimM (176 aa).

The region spanning proline 100–leucine 172 is the PRC barrel domain.

The protein belongs to the RimM family. As to quaternary structure, binds ribosomal protein uS19.

The protein resides in the cytoplasm. In terms of biological role, an accessory protein needed during the final step in the assembly of 30S ribosomal subunit, possibly for assembly of the head region. Essential for efficient processing of 16S rRNA. May be needed both before and after RbfA during the maturation of 16S rRNA. It has affinity for free ribosomal 30S subunits but not for 70S ribosomes. The polypeptide is Ribosome maturation factor RimM (Mycobacterium bovis (strain ATCC BAA-935 / AF2122/97)).